Reading from the N-terminus, the 144-residue chain is Maximins 4/H3 type 3 (144 aa).

A signal peptide spans 1–18 (MNFKYIIAVSFFIASAYA). Residues 19–43 (RTEEKDVQSLSQRDVLEEESLREIR) constitute a propeptide that is removed on maturation. Asn70 is modified (asparagine amide). The propeptide occupies 74–123 (TAEDHEVMKRLEAVMRDLDSLDHPEEASERQTRGFNQEEIANLFTKKEKR). Ile143 is modified (isoleucine amide).

Belongs to the bombinin family. In terms of tissue distribution, expressed by the skin glands.

It localises to the secreted. In terms of biological role, maximin-4 shows antibacterial activity against both Gram-positive and Gram-negative bacteria. It also shows antimicrobial activity against the fungus C.albicans, but not against A.flavus nor P.uticale. It has little hemolytic activity. It does not possess a significant cytotoxicity against tumor cell lines. It does not possess a significant anti-HIV activity. Maximin-H3 shows antibacterial activity against both Gram-positive and Gram-negative bacteria. It also shows antimicrobial activity against the fungus C.albicans. Shows strong hemolytic activity. The chain is Maximins 4/H3 type 3 from Bombina maxima (Giant fire-bellied toad).